A 296-amino-acid polypeptide reads, in one-letter code: Phosphatidylserine decarboxylase proenzyme (296 aa).

Catalysis depends on charge relay system; for autoendoproteolytic cleavage activity residues Asp-113, His-169, and Ser-256. Ser-256 (schiff-base intermediate with substrate; via pyruvic acid; for decarboxylase activity) is an active-site residue. Ser-256 is subject to Pyruvic acid (Ser); by autocatalysis.

This sequence belongs to the phosphatidylserine decarboxylase family. PSD-B subfamily. Prokaryotic type II sub-subfamily. Heterodimer of a large membrane-associated beta subunit and a small pyruvoyl-containing alpha subunit. Requires pyruvate as cofactor. In terms of processing, is synthesized initially as an inactive proenzyme. Formation of the active enzyme involves a self-maturation process in which the active site pyruvoyl group is generated from an internal serine residue via an autocatalytic post-translational modification. Two non-identical subunits are generated from the proenzyme in this reaction, and the pyruvate is formed at the N-terminus of the alpha chain, which is derived from the carboxyl end of the proenzyme. The autoendoproteolytic cleavage occurs by a canonical serine protease mechanism, in which the side chain hydroxyl group of the serine supplies its oxygen atom to form the C-terminus of the beta chain, while the remainder of the serine residue undergoes an oxidative deamination to produce ammonia and the pyruvoyl prosthetic group on the alpha chain. During this reaction, the Ser that is part of the protease active site of the proenzyme becomes the pyruvoyl prosthetic group, which constitutes an essential element of the active site of the mature decarboxylase.

It localises to the cell membrane. The catalysed reaction is a 1,2-diacyl-sn-glycero-3-phospho-L-serine + H(+) = a 1,2-diacyl-sn-glycero-3-phosphoethanolamine + CO2. Its pathway is phospholipid metabolism; phosphatidylethanolamine biosynthesis; phosphatidylethanolamine from CDP-diacylglycerol: step 2/2. Functionally, catalyzes the formation of phosphatidylethanolamine (PtdEtn) from phosphatidylserine (PtdSer). The chain is Phosphatidylserine decarboxylase proenzyme from Clostridium beijerinckii (strain ATCC 51743 / NCIMB 8052) (Clostridium acetobutylicum).